Consider the following 1765-residue polypeptide: RANBP2-like and GRIP domain-containing protein 5/6 (1765 aa).

A Phosphothreonine modification is found at threonine 19. The residue at position 21 (serine 21) is a Phosphoserine. TPR repeat units follow at residues 26–59 (SMKG…QERD), 60–93 (PKAH…NPTQ), and 648–681 (EDAH…VSYW). Disordered regions lie at residues 760 to 804 (GPLY…PRWT) and 924 to 945 (FGIS…NDTG). The segment covering 778 to 797 (STPSPTKYSLSPSKSYKYSP) has biased composition (low complexity). Basic and acidic residues predominate over residues 931–941 (NQEKKREKPLE). The RanBD1 1 domain occupies 1036–1172 (HFEPVVQMPE…FEECQRLLLD (137 aa)). 2 disordered regions span residues 1214-1247 (KVTE…PTLE) and 1306-1330 (AKLN…EERD). The span at 1235–1244 (IKPNAENTGP) shows a compositional bias: polar residues. Residues 1317–1329 (TDEESVVTQEEER) are compositionally biased toward acidic residues. Residues 1333–1469 (YFEPVVPLPD…FDEAKTAQEK (137 aa)) enclose the RanBD1 2 domain. The span at 1580 to 1593 (NNSETSSVAQSGSE) shows a compositional bias: polar residues. The tract at residues 1580–1621 (NNSETSSVAQSGSESKVEPKKCELSKNSDIEQSSDSKVKNLS) is disordered. Basic and acidic residues predominate over residues 1594–1617 (SKVEPKKCELSKNSDIEQSSDSKV). In terms of domain architecture, GRIP spans 1702 to 1752 (REKSAANLEYLKNVLLQFIFLKPGSERERLLPVINTMLQLSPEEKGKLAAV).

Expressed in testis.

The protein resides in the cytoplasm. In Homo sapiens (Human), this protein is RANBP2-like and GRIP domain-containing protein 5/6 (RGPD5).